The sequence spans 517 residues: RNA-binding region-containing protein 3 (517 aa).

The tract at residues 1 to 26 is disordered; it reads MAAPEQPLAISRGCTSSSSLSPPRGD. Positions 1 to 257 are necessary for interaction with PDCD7; that stretch reads MAAPEQPLAI…STDDEDRQRM (257 aa). Position 21 is a phosphoserine (Ser21). In terms of domain architecture, RRM 1 spans 27 to 102; sequence RTLLVRHLPA…HTLVVEFAKE (76 aa). Disordered regions lie at residues 106–130 and 213–254; these read VHSP…DDKE and MPLH…DEDR. Residue Ser108 is modified to Phosphoserine. A compositionally biased stretch (basic and acidic residues) spans 115–130; the sequence is SEKKKRSDDPVEDDKE. A necessary for binding to m(7)G-capped U12 snRNA region spans residues 211-380; that stretch reads DYMPLHAPLP…LDITEEIKED (170 aa). The segment covering 217–230 has biased composition (pro residues); that stretch reads APLPPTSPQPPEEP. The segment covering 231–252 has biased composition (acidic residues); it reads PLPDEDEELSSEESEYESTDDE. The RRM 2 domain maps to 420–503; it reads CRIYVKNLAK…KPMVVQFARS (84 aa).

Component of the U11/U12 snRNPs that are part of the U12-type spliceosome. Found in a complex with m(7)G-capped U12 snRNA. Interacts with PDCD7. Highly expressed in pancreas and kidney. Detected at lower levels in heart, brain, placenta, lung, liver, spleen, thymus, prostate, testis, ovary, small intestine, colon and leukocytes.

Its subcellular location is the nucleus. Its function is as follows. Participates in pre-mRNA U12-dependent splicing, performed by the minor spliceosome which removes U12-type introns. U12-type introns comprises less than 1% of all non-coding sequences. Binds to the 3'-stem-loop of m(7)G-capped U12 snRNA. This chain is RNA-binding region-containing protein 3 (RNPC3), found in Homo sapiens (Human).